A 189-amino-acid chain; its full sequence is Parkinson disease protein 7 homolog (189 aa).

The residue at position 2 (A2) is an N-acetylalanine. 2 S-palmitoyl cysteine lipidation sites follow: C46 and C53. At Y67 the chain carries Phosphotyrosine. C106 acts as the Nucleophile in catalysis. The residue at position 106 (C106) is a Cysteine sulfinic acid (-SO2H); alternate. C106 carries the S-palmitoyl cysteine; alternate lipid modification. The active site involves H126. K130 is covalently cross-linked (Glycyl lysine isopeptide (Lys-Gly) (interchain with G-Cter in SUMO)). K148 bears the N6-acetyllysine mark. Position 182 is an N6-succinyllysine (K182).

The protein belongs to the peptidase C56 family. As to quaternary structure, homodimer. Binds EFCAB6/DJBP and PIAS2. Part of a ternary complex containing PARK7, EFCAB6/DJBP and AR. Binds to HIPK1. Interacts (via N-terminus) with OTUD7B. Interacts with BBS1, CLCF1 and MTERF. Interacts (via C-terminus) with NCF1; the interaction is enhanced by LPS and modulates NCF1 phosphorylation and membrane translocation. Interacts with NENF. Deglycase activity does not require glutathione as a cofactor, however, glycated glutathione constitutes a PARK7 substrate. is required as a cofactor. Sumoylated on Lys-130 by PIAS2 or PIAS4; which is essential for cell-growth promoting activity and transforming activity. Post-translationally, undergoes cleavage of a C-terminal peptide and subsequent activation of protease activity in response to oxidative stress. As to expression, expressed in erythroblasts and in mature red blood cells from peripheral blood (at protein level). In pancreas, expression is higher in islets than surrounding exocrine tissues.

The protein localises to the cell membrane. It is found in the cytoplasm. Its subcellular location is the membrane raft. The protein resides in the nucleus. It localises to the mitochondrion. The protein localises to the endoplasmic reticulum. The enzyme catalyses N(omega)-(1-hydroxy-2-oxopropyl)-L-arginyl-[protein] + H2O = lactate + L-arginyl-[protein] + H(+). It carries out the reaction N(6)-(1-hydroxy-2-oxopropyl)-L-lysyl-[protein] + H2O = lactate + L-lysyl-[protein] + H(+). The catalysed reaction is S-(1-hydroxy-2-oxopropyl)-L-cysteinyl-[protein] + H2O = lactate + L-cysteinyl-[protein] + H(+). It catalyses the reaction N(omega)-(1-hydroxy-2-oxoethyl)-L-arginyl-[protein] + H2O = L-arginyl-[protein] + glycolate + H(+). The enzyme catalyses N(6)-(1-hydroxy-2-oxoethyl)-L-lysyl-[protein] + H2O = glycolate + L-lysyl-[protein] + H(+). It carries out the reaction S-(1-hydroxy-2-oxoethyl)-L-cysteinyl-[protein] + H2O = glycolate + L-cysteinyl-[protein] + H(+). The catalysed reaction is N(2)-(1-hydroxy-2-oxopropyl)-dGTP + H2O = lactate + dGTP + H(+). It catalyses the reaction N(2)-(1-hydroxy-2-oxopropyl)-GTP + H2O = lactate + GTP + H(+). The enzyme catalyses N(2)-(1-hydroxy-2-oxopropyl)-GDP + H2O = lactate + GDP + H(+). It carries out the reaction N(2)-(1-hydroxy-2-oxopropyl)-GMP + H2O = lactate + GMP + H(+). The catalysed reaction is N(2)-(1-hydroxy-2-oxoethyl)-dGTP + H2O = dGTP + glycolate + H(+). It catalyses the reaction N(2)-(1-hydroxy-2-oxoethyl)-GTP + H2O = glycolate + GTP + H(+). The enzyme catalyses N(2)-(1-hydroxy-2-oxoethyl)-GDP + H2O = glycolate + GDP + H(+). It carries out the reaction N(2)-(1-hydroxy-2-oxoethyl)-GMP + H2O = glycolate + GMP + H(+). The catalysed reaction is an N(2)-(1-hydroxy-2-oxopropyl)-guanosine in RNA + H2O = a guanosine in RNA + lactate + H(+). It catalyses the reaction an N(2)-(1-hydroxy-2-oxopropyl)-2'-deoxyguanosine in DNA + H2O = a 2'-deoxyguanosine in DNA + lactate + H(+). The enzyme catalyses an N(2)-(1-hydroxy-2-oxoethyl)-guanosine in RNA + H2O = a guanosine in RNA + glycolate + H(+). It carries out the reaction an N(2)-(1-hydroxy-2-oxoethyl)-2'-deoxyguanosine in DNA + H2O = a 2'-deoxyguanosine in DNA + glycolate + H(+). Functionally, multifunctional protein with controversial molecular function which plays an important role in cell protection against oxidative stress and cell death acting as oxidative stress sensor and redox-sensitive chaperone and protease. It is involved in neuroprotective mechanisms like the stabilization of NFE2L2 and PINK1 proteins, male fertility as a positive regulator of androgen signaling pathway as well as cell growth and transformation through, for instance, the modulation of NF-kappa-B signaling pathway. Has been described as a protein and nucleotide deglycase that catalyzes the deglycation of the Maillard adducts formed between amino groups of proteins or nucleotides and reactive carbonyl groups of glyoxals. But this function is rebuted by other works. As a protein deglycase, repairs methylglyoxal- and glyoxal-glycated proteins, and releases repaired proteins and lactate or glycolate, respectively. Deglycates cysteine, arginine and lysine residues in proteins, and thus reactivates these proteins by reversing glycation by glyoxals. Acts on early glycation intermediates (hemithioacetals and aminocarbinols), preventing the formation of advanced glycation endproducts (AGE) that cause irreversible damage. Also functions as a nucleotide deglycase able to repair glycated guanine in the free nucleotide pool (GTP, GDP, GMP, dGTP) and in DNA and RNA. Is thus involved in a major nucleotide repair system named guanine glycation repair (GG repair), dedicated to reversing methylglyoxal and glyoxal damage via nucleotide sanitization and direct nucleic acid repair. Protects histones from adduction by methylglyoxal, controls the levels of methylglyoxal-derived argininine modifications on chromatin. Able to remove the glycations and restore histone 3, histone glycation disrupts both local and global chromatin architecture by altering histone-DNA interactions as well as histone acetylation and ubiquitination levels. Displays a very low glyoxalase activity that may reflect its deglycase activity. Eliminates hydrogen peroxide and protects cells against hydrogen peroxide-induced cell death. Required for correct mitochondrial morphology and function as well as for autophagy of dysfunctional mitochondria. Plays a role in regulating expression or stability of the mitochondrial uncoupling proteins SLC25A14 and SLC25A27 in dopaminergic neurons of the substantia nigra pars compacta and attenuates the oxidative stress induced by calcium entry into the neurons via L-type channels during pacemaking. Regulates astrocyte inflammatory responses, may modulate lipid rafts-dependent endocytosis in astrocytes and neuronal cells. In pancreatic islets, involved in the maintenance of mitochondrial reactive oxygen species (ROS) levels and glucose homeostasis in an age- and diet dependent manner. Protects pancreatic beta cells from cell death induced by inflammatory and cytotoxic setting. Binds to a number of mRNAs containing multiple copies of GG or CC motifs and partially inhibits their translation but dissociates following oxidative stress. Metal-binding protein able to bind copper as well as toxic mercury ions, enhances the cell protection mechanism against induced metal toxicity. In macrophages, interacts with the NADPH oxidase subunit NCF1 to direct NADPH oxidase-dependent ROS production, and protects against sepsis. The chain is Parkinson disease protein 7 homolog from Mus musculus (Mouse).